Consider the following 239-residue polypeptide: MDTSQLKERVAYHAIDTLFSEGKIFDGMKIGLGTGSTAMPAVHRLAQLLSSGKLKKIYAVPTSFQTSIECEKLGIPIYSLSSQQIGGSLDLAIDGADEIDPDKNLIKGGGAALLKEKIIAYNSKEFVVIADERKKVKSMGKGFALPIEIIPEARLSITKALEAQGIEVFLREGVKKMGPVVTDNGNFIIDVKWPKAADVDPKALEESLNKITGVVENGFFTKNTPRVFIVHQDGNIEDL.

Residues T34–T37, D94–D97, and K107–G110 contribute to the substrate site. E116 acts as the Proton acceptor in catalysis. K134 lines the substrate pocket.

Belongs to the ribose 5-phosphate isomerase family. As to quaternary structure, homodimer.

It catalyses the reaction aldehydo-D-ribose 5-phosphate = D-ribulose 5-phosphate. It participates in carbohydrate degradation; pentose phosphate pathway; D-ribose 5-phosphate from D-ribulose 5-phosphate (non-oxidative stage): step 1/1. Its function is as follows. Catalyzes the reversible conversion of ribose-5-phosphate to ribulose 5-phosphate. The sequence is that of Ribose-5-phosphate isomerase A from Treponema denticola (strain ATCC 35405 / DSM 14222 / CIP 103919 / JCM 8153 / KCTC 15104).